The chain runs to 510 residues: MDKQLVLVIDFGGQYNQLIARRVREHNVYCEIVPYTYSIDKIKEKKPSAVIFTGGQNSVYGEDSPRMDKEIFDLGVPVLGICYGHQLITYTLGGEVMGSEIREYGKTDVTLDSVCELFEGIDIENSCWMSHTDRVAKVPEGFKVVGHTNVCPVAAMANTEKKIYGVQFHPEVLHTPFGEQLFSNFLFKICGLKEDWSMSSFAKEKIQEIKDIVGDKKVLCALSGGVDSSVAAVLVHKAIGKQLTCVFVDHGLLRKDEGDQVESIFRKQFDMNLIRVNAKDRFLGKLKGISDPERKRKIIGEEFIRVFEEEANKLGQIDFLVQGTIYPDVVESGTDTSATIKSHHNVGGLPEDMQFELIEPLRELFKDEVRAVGEELGIPHKLVWRQPFPGPGLGIRVLGEVTEEKLEIVREADAIFREEIANAGLEEKIWQYFACLPNIHSVGVMGDGRTYCETIALRAVTSSDAMTSDWARIPYEVLDKVSRRIVNEVKGVNRIVYDVTSKPPATIEWE.

The region spanning 5–195 (LVLVIDFGGQ…LFKICGLKED (191 aa)) is the Glutamine amidotransferase type-1 domain. Residue Cys82 is the Nucleophile of the active site. Active-site residues include His169 and Glu171. Positions 196-385 (WSMSSFAKEK…LGIPHKLVWR (190 aa)) constitute a GMPS ATP-PPase domain. Position 223 to 229 (223 to 229 (SGGVDSS)) interacts with ATP.

As to quaternary structure, homodimer.

The enzyme catalyses XMP + L-glutamine + ATP + H2O = GMP + L-glutamate + AMP + diphosphate + 2 H(+). It functions in the pathway purine metabolism; GMP biosynthesis; GMP from XMP (L-Gln route): step 1/1. Functionally, catalyzes the synthesis of GMP from XMP. This chain is GMP synthase [glutamine-hydrolyzing], found in Clostridium acetobutylicum (strain ATCC 824 / DSM 792 / JCM 1419 / IAM 19013 / LMG 5710 / NBRC 13948 / NRRL B-527 / VKM B-1787 / 2291 / W).